Reading from the N-terminus, the 161-residue chain is Dehydrin DHN3 (161 aa).

Residues 1 to 12 (MEHGHATNRVDE) are compositionally biased toward basic and acidic residues. The segment at 1-161 (MEHGHATNRV…KIKEKLPGQH (161 aa)) is disordered. Residues 20 to 38 (HGVGTGMGAHGGVGTGAAA) are compositionally biased toward gly residues. 2 stretches are compositionally biased toward low complexity: residues 93–107 (DQQQ…HGHT) and 115–130 (HGAT…QGHT). 2 repeat units span residues 101–123 (YGQH…TGGT) and 124–144 (YGQQ…DGTG). The tract at residues 101–144 (YGQHGHTGMTGTGEHGATATGGTYGQQGHTGMTGTGAHGTDGTG) is 2 X approximate tandem repeats. The span at 131–142 (GMTGTGAHGTDG) shows a compositional bias: gly residues. The segment covering 143-161 (TGEKKGIMDKIKEKLPGQH) has biased composition (basic and acidic residues).

The protein belongs to the plant dehydrin family.

The polypeptide is Dehydrin DHN3 (DHN3) (Hordeum vulgare (Barley)).